Reading from the N-terminus, the 861-residue chain is Probable linoleate 9S-lipoxygenase 7 (861 aa).

Positions 29–160 (NVLDFTDLAG…NYKSDRIFFA (132 aa)) constitute a PLAT domain. Positions 163–861 (PYLPSETPEL…GKGIPNSVSI (699 aa)) constitute a Lipoxygenase domain. Residues 220-246 (TLGGSAEYPYPRRGRTGRPPTRTDPKS) are disordered. Fe cation is bound by residues His-522, His-527, His-713, Asn-717, and Ile-861.

Belongs to the lipoxygenase family. In terms of assembly, monomer. The cofactor is Fe cation. Expressed in tubers. Detected in sprouts and flowers. but not in leaves or stems.

Its subcellular location is the cytoplasm. It carries out the reaction (9Z,12Z)-octadecadienoate + O2 = (9S)-hydroperoxy-(10E,12Z)-octadecadienoate. It functions in the pathway lipid metabolism; oxylipin biosynthesis. Functionally, plant lipoxygenases may be involved in a number of diverse aspects of plant physiology including growth and development, pest resistance, and senescence or responses to wounding. Catalyzes the hydroperoxidation of lipids containing a cis,cis-1,4-pentadiene structure. The sequence is that of Probable linoleate 9S-lipoxygenase 7 (LOX1.7) from Solanum tuberosum (Potato).